Consider the following 171-residue polypeptide: Sec-independent protein translocase protein TatB (171 aa).

The helical transmembrane segment at 1-21 threads the bilayer; sequence MFDIGFSELLLVFIIGLVVLG. Residues 117 to 171 form a disordered region; sequence KDNEAAHEGVTPAAAQTQASSPEQKPETTPEPVVKPAADAEPKTAAPSPSSSDKP. Over residues 130 to 139 the composition is skewed to polar residues; that stretch reads AAQTQASSPE.

This sequence belongs to the TatB family. In terms of assembly, the Tat system comprises two distinct complexes: a TatABC complex, containing multiple copies of TatA, TatB and TatC subunits, and a separate TatA complex, containing only TatA subunits. Substrates initially bind to the TatABC complex, which probably triggers association of the separate TatA complex to form the active translocon.

The protein localises to the cell inner membrane. Its function is as follows. Part of the twin-arginine translocation (Tat) system that transports large folded proteins containing a characteristic twin-arginine motif in their signal peptide across membranes. Together with TatC, TatB is part of a receptor directly interacting with Tat signal peptides. TatB may form an oligomeric binding site that transiently accommodates folded Tat precursor proteins before their translocation. This chain is Sec-independent protein translocase protein TatB, found in Escherichia coli O157:H7.